We begin with the raw amino-acid sequence, 322 residues long: Undecaprenyl-phosphate 4-deoxy-4-formamido-L-arabinose transferase (322 aa).

At 1-235 (MFEIHPVKKV…TCLTTTPLRM (235 aa)) the chain is on the cytoplasmic side. Residues 236-256 (LSLLGSIIAIGGFSIAVLLVI) traverse the membrane as a helical segment. The Periplasmic portion of the chain corresponds to 257–269 (LRLTFGPQWAAEG). Residues 270–290 (VFMLFAVLFTFIGAQFIGMGL) traverse the membrane as a helical segment. Over 291–322 (LGEYIGRIYTDVRARPRYFVQQVIRPSSKENE) the chain is Cytoplasmic.

The protein belongs to the glycosyltransferase 2 family.

It localises to the cell inner membrane. It catalyses the reaction UDP-4-deoxy-4-formamido-beta-L-arabinose + di-trans,octa-cis-undecaprenyl phosphate = 4-deoxy-4-formamido-alpha-L-arabinopyranosyl di-trans,octa-cis-undecaprenyl phosphate + UDP. It participates in glycolipid biosynthesis; 4-amino-4-deoxy-alpha-L-arabinose undecaprenyl phosphate biosynthesis; 4-amino-4-deoxy-alpha-L-arabinose undecaprenyl phosphate from UDP-4-deoxy-4-formamido-beta-L-arabinose and undecaprenyl phosphate: step 1/2. The protein operates within bacterial outer membrane biogenesis; lipopolysaccharide biosynthesis. In terms of biological role, catalyzes the transfer of 4-deoxy-4-formamido-L-arabinose from UDP to undecaprenyl phosphate. The modified arabinose is attached to lipid A and is required for resistance to polymyxin and cationic antimicrobial peptides. The sequence is that of Undecaprenyl-phosphate 4-deoxy-4-formamido-L-arabinose transferase from Escherichia coli O45:K1 (strain S88 / ExPEC).